The following is a 1199-amino-acid chain: DNA-directed RNA polymerase subunit beta' (1199 aa).

Zn(2+) is bound by residues Cys-60, Cys-62, Cys-75, and Cys-78. Mg(2+)-binding residues include Asp-449, Asp-451, and Asp-453. Zn(2+) is bound by residues Cys-818, Cys-892, Cys-899, and Cys-902.

It belongs to the RNA polymerase beta' chain family. In terms of assembly, the RNAP catalytic core consists of 2 alpha, 1 beta, 1 beta' and 1 omega subunit. When a sigma factor is associated with the core the holoenzyme is formed, which can initiate transcription. It depends on Mg(2+) as a cofactor. Requires Zn(2+) as cofactor.

It catalyses the reaction RNA(n) + a ribonucleoside 5'-triphosphate = RNA(n+1) + diphosphate. Its function is as follows. DNA-dependent RNA polymerase catalyzes the transcription of DNA into RNA using the four ribonucleoside triphosphates as substrates. This Exiguobacterium sibiricum (strain DSM 17290 / CCUG 55495 / CIP 109462 / JCM 13490 / 255-15) protein is DNA-directed RNA polymerase subunit beta'.